We begin with the raw amino-acid sequence, 393 residues long: Bifunctional enzyme Fae/Hps (393 aa).

The segment at 1-161 (MYLIGEALVG…HEKDRAAHAV (161 aa)) is formaldehyde-activating enzyme. The active-site Proton donor is the His-17. Asp-19, Leu-48, Lys-66, Thr-68, and Gln-83 together coordinate substrate. The tract at residues 162–393 (MGFKVQRLWD…IDQFRIMTDF (232 aa)) is 3-hexulose-6-phosphate synthase.

This sequence in the N-terminal section; belongs to the formaldehyde-activating enzyme family. It in the C-terminal section; belongs to the HPS/KGPDC family. HPS subfamily.

The enzyme catalyses 5,6,7,8-tetrahydromethanopterin + formaldehyde = 5,10-methylenetetrahydromethanopterin + H2O. It carries out the reaction D-ribulose 5-phosphate + formaldehyde = D-arabino-hex-3-ulose 6-phosphate. It participates in carbohydrate biosynthesis; D-ribose 5-phosphate biosynthesis. Functionally, catalyzes the condensation of formaldehyde with tetrahydromethanopterin (H(4)MPT) to 5,10-methylenetetrahydromethanopterin. Its function is as follows. Catalyzes the reversible formation of ribulose-5-phosphate and formaldehyde from 3-hexulose-6-phosphate. In Methanoculleus marisnigri (strain ATCC 35101 / DSM 1498 / JR1), this protein is Bifunctional enzyme Fae/Hps.